We begin with the raw amino-acid sequence, 1408 residues long: DNA-directed RNA polymerase subunit beta' (1408 aa).

Zn(2+)-binding residues include Cys70, Cys72, Cys85, and Cys88. Asp460, Asp462, and Asp464 together coordinate Mg(2+). Zn(2+) is bound by residues Cys814, Cys888, Cys895, and Cys898.

The protein belongs to the RNA polymerase beta' chain family. As to quaternary structure, the RNAP catalytic core consists of 2 alpha, 1 beta, 1 beta' and 1 omega subunit. When a sigma factor is associated with the core the holoenzyme is formed, which can initiate transcription. Mg(2+) serves as cofactor. Requires Zn(2+) as cofactor.

It catalyses the reaction RNA(n) + a ribonucleoside 5'-triphosphate = RNA(n+1) + diphosphate. Its function is as follows. DNA-dependent RNA polymerase catalyzes the transcription of DNA into RNA using the four ribonucleoside triphosphates as substrates. This Baumannia cicadellinicola subsp. Homalodisca coagulata protein is DNA-directed RNA polymerase subunit beta'.